A 424-amino-acid polypeptide reads, in one-letter code: Cyclin-dependent kinase D-1 (424 aa).

In terms of domain architecture, Protein kinase spans 19 to 299 (YLKREVLGEG…AQQALEHRYF (281 aa)). Residues 25-33 (LGEGTYGVV) and Lys48 each bind ATP. Thr29 is subject to Phosphothreonine. Tyr30 carries the post-translational modification Phosphotyrosine. Catalysis depends on Asp141, which acts as the Proton acceptor. A Phosphoserine modification is found at Ser168. Thr174 carries the post-translational modification Phosphothreonine. Disordered regions lie at residues 303-337 (PAPT…PVVL) and 359-424 (ADRT…GYTE). A compositionally biased stretch (basic and acidic residues) spans 359–374 (ADRTEEHPSGARHMDD).

This sequence belongs to the protein kinase superfamily. CMGC Ser/Thr protein kinase family. CDC2/CDKX subfamily.

The protein localises to the nucleus. The catalysed reaction is L-seryl-[protein] + ATP = O-phospho-L-seryl-[protein] + ADP + H(+). It catalyses the reaction L-threonyl-[protein] + ATP = O-phospho-L-threonyl-[protein] + ADP + H(+). The enzyme catalyses [DNA-directed RNA polymerase] + ATP = phospho-[DNA-directed RNA polymerase] + ADP + H(+). This chain is Cyclin-dependent kinase D-1 (CDKD-1), found in Oryza sativa subsp. indica (Rice).